A 346-amino-acid polypeptide reads, in one-letter code: Heat-inducible transcription repressor HrcA (346 aa).

It belongs to the HrcA family.

Negative regulator of class I heat shock genes (grpE-dnaK-dnaJ and groELS operons). Prevents heat-shock induction of these operons. This chain is Heat-inducible transcription repressor HrcA, found in Kineococcus radiotolerans (strain ATCC BAA-149 / DSM 14245 / SRS30216).